The following is a 102-amino-acid chain: Thioredoxin (102 aa).

The Thioredoxin domain occupies 1–102 (MVQIVSQDNF…SLVKLISKHQ (102 aa)). Residues Cys28 and Cys31 are joined by a disulfide bond.

The protein belongs to the thioredoxin family.

Functionally, participates in various redox reactions through the reversible oxidation of its active center dithiol to a disulfide and catalyzes dithiol-disulfide exchange reactions. This chain is Thioredoxin (trxA), found in Chlamydia muridarum (strain MoPn / Nigg).